The following is a 288-amino-acid chain: MAVGKEIRTQISSIKNTQKITSAMEMVAASKMKKAQDRMLESRPYCEKISNIIGHLAYAHSEFQHPYMNSLKKLQSIGIIIISSDRGLCGGLNTNLFRYILRQVVEYQANGIKVDICTIGKKATLFFKNFGLNVKSVLTDLGDSPHFDDLLGTIKIMLDGFDLGEIQQLSVAYNKFENTMIQIPTIMQLVPIVSIKSDNINHYWDYIYEPNAQEVLSALLVRYIEALVYQGLVENISCEQSSRMIAMKSATDNAGDMVKELELIYNKARQAAITQEISEIVSGGATAV.

It belongs to the ATPase gamma chain family. F-type ATPases have 2 components, CF(1) - the catalytic core - and CF(0) - the membrane proton channel. CF(1) has five subunits: alpha(3), beta(3), gamma(1), delta(1), epsilon(1). CF(0) has three main subunits: a, b and c.

The protein resides in the cell inner membrane. In terms of biological role, produces ATP from ADP in the presence of a proton gradient across the membrane. The gamma chain is believed to be important in regulating ATPase activity and the flow of protons through the CF(0) complex. The chain is ATP synthase gamma chain from Vesicomyosocius okutanii subsp. Calyptogena okutanii (strain HA).